Reading from the N-terminus, the 592-residue chain is Bifunctional dolabella-3,7-dien-18-ol synthase/dolathalia-3,7,11-triene synthase TPS20, chloroplastic (592 aa).

The transit peptide at 1-52 (MEAITKNGSLSQTLVHCGPKSLSSFIPVRCLRFSKNPFPKKLVVTRARTSIN) directs the protein to the chloroplast. Positions 349, 353, 491, 495, and 499 each coordinate Mg(2+). A DDXXD motif motif is present at residues 349 to 353 (DDLYD).

It belongs to the terpene synthase family. Tpsa subfamily. The cofactor is Mg(2+). Mn(2+) serves as cofactor.

It is found in the plastid. The protein localises to the chloroplast. It carries out the reaction (2E,6E,10E)-geranylgeranyl diphosphate + H2O = (3E,7E)-dolabella-3,7-dien-18-ol + diphosphate. The catalysed reaction is (2E,6E,10E)-geranylgeranyl diphosphate = (3E,7E)-dolathalia-3,7,11-triene + diphosphate. It functions in the pathway secondary metabolite biosynthesis; terpenoid biosynthesis. Involved in the biosynthesis of diterpenes in roots. Possesses dolabella-3,7-dien-18-ol synthase activity and dolathalia-3,7,11-triene synthase activity in vitro. Catalyzes the formation of dolabella-3,7-dien-18-ol and dolathalia-3,7,11-triene from geranygeranyl diphosphate (GGPP). Does not seem to be involved in sesquiterpene biosynthesis. This Arabidopsis thaliana (Mouse-ear cress) protein is Bifunctional dolabella-3,7-dien-18-ol synthase/dolathalia-3,7,11-triene synthase TPS20, chloroplastic.